A 272-amino-acid chain; its full sequence is Shikimate dehydrogenase (NADP(+)) (272 aa).

Shikimate-binding positions include 14–16 (SKS) and Thr61. Catalysis depends on Lys65, which acts as the Proton acceptor. Residue Glu77 participates in NADP(+) binding. The shikimate site is built by Asn86 and Asp102. NADP(+) contacts are provided by residues 126–130 (GAGGA), 149–154 (NRTVSR), and Met213. Residue Tyr215 participates in shikimate binding. Gly237 is a binding site for NADP(+).

The protein belongs to the shikimate dehydrogenase family. In terms of assembly, homodimer.

The catalysed reaction is shikimate + NADP(+) = 3-dehydroshikimate + NADPH + H(+). Its pathway is metabolic intermediate biosynthesis; chorismate biosynthesis; chorismate from D-erythrose 4-phosphate and phosphoenolpyruvate: step 4/7. Functionally, involved in the biosynthesis of the chorismate, which leads to the biosynthesis of aromatic amino acids. Catalyzes the reversible NADPH linked reduction of 3-dehydroshikimate (DHSA) to yield shikimate (SA). In Escherichia coli O139:H28 (strain E24377A / ETEC), this protein is Shikimate dehydrogenase (NADP(+)).